The sequence spans 147 residues: MVHFTAEEKAAITGLWGKVNVEEAGGEALGRLLVVYPWTQRFFDSFGNLSSASAIMGNPKVKAHGKKVLTSFGEAIKNLDNLKGAFAKLSELHCDKLHVDPENFRLLGNVIVIILATHFGREFTPDVQAAWQKLVSGVATALAHKYH.

The Globin domain occupies 3–147; that stretch reads HFTAEEKAAI…VATALAHKYH (145 aa). 2 residues coordinate heme b: H64 and H93.

This sequence belongs to the globin family. As to quaternary structure, heterotetramer of two epsilon chains and two alpha chains. Red blood cells.

Its function is as follows. Beta-type chain found in early embryos. The protein is Hemoglobin subunit epsilon-1 (HBE1) of Capra hircus (Goat).